The chain runs to 318 residues: MTELTAATPTKRPATATDYVNLMKPRIMMLVVFTAVAGLAAASGMTGITMHPAMAAIAVLAVALGSGAAGAINMWYDADIDAIMSRTSTRPIPSGAVPKEEALTMGLIMSGVSVMLMWLASNWLAAALLAFSIFYYGVIYTMWLKRATPQNIVIGGGAGAFPPVIGWAAVTGNTPLDAWILFAIIFFWTPPHFWALSLLAHKEYAKVSVPMLPVTHGAKATRFQILVYTLVLIPVSLAPLATGLGGWIYGAVAGGLGLVFLAYAVAILRSKAGDDGAPAGDMKLARTAFLFSILYLFALFGAVLVEHAAGLHFPVFGA.

Helical transmembrane passes span 27 to 47, 52 to 72, 103 to 123, 124 to 144, 152 to 172, 179 to 199, 225 to 245, 248 to 268, and 288 to 308; these read IMML…GMTG, PAMA…AGAI, LTMG…ASNW, LAAA…TMWL, IVIG…AVTG, WILF…LSLL, ILVY…TGLG, IYGA…VAIL, and AFLF…VEHA.

This sequence belongs to the UbiA prenyltransferase family. Protoheme IX farnesyltransferase subfamily. Interacts with CtaA.

It localises to the cell inner membrane. The catalysed reaction is heme b + (2E,6E)-farnesyl diphosphate + H2O = Fe(II)-heme o + diphosphate. The protein operates within porphyrin-containing compound metabolism; heme O biosynthesis; heme O from protoheme: step 1/1. Converts heme B (protoheme IX) to heme O by substitution of the vinyl group on carbon 2 of heme B porphyrin ring with a hydroxyethyl farnesyl side group. The chain is Protoheme IX farnesyltransferase from Hyphomonas neptunium (strain ATCC 15444).